Here is a 902-residue protein sequence, read N- to C-terminus: Glutamate receptor 4 (902 aa).

The first 20 residues, 1–20, serve as a signal peptide directing secretion; that stretch reads MRIICRQIVLLFSGFWGLAM. The Extracellular segment spans residues 22–544; sequence AFPSSVQIGG…GVFSFLDPLA (523 aa). Asn-52, Asn-56, Asn-258, Asn-371, Asn-407, and Asn-414 each carry an N-linked (GlcNAc...) asparagine glycan. An intrachain disulfide couples Cys-84 to Cys-331. L-glutamate-binding residues include Pro-500, Thr-502, and Arg-507. Residues 545–565 traverse the membrane as a helical segment; the sequence is YEIWMCIVFAYIGVSVVLFLV. Over 566 to 592 the chain is Cytoplasmic; it reads SRFSPYEWHTEEPEDGKEGPSDQPPNE. Positions 593–608 form an intramembrane region, helical; Pore-forming; the sequence is FGIFNSLWFSLGAFMQ. The stretch at 609–611 is an intramembrane region; it reads QGC. Cys-611 is lipidated: S-palmitoyl cysteine. Over 612 to 617 the chain is Cytoplasmic; it reads DISPRS. Residues 618–638 traverse the membrane as a helical segment; it reads LSGRIVGGVWWFFTLIIISSY. The Extracellular segment spans residues 639 to 813; sequence TANLAAFLTV…DKTSALSLSN (175 aa). Residues Ser-676, Thr-677, and Glu-727 each contribute to the L-glutamate site. Cys-740 and Cys-795 are joined by a disulfide. A helical membrane pass occupies residues 814-834; sequence VAGVFYILVGGLGLAMLVALI. Over 835–902 the chain is Cytoplasmic; the sequence is EFCYKSRAEA…GLAVIASDLP (68 aa). A lipid anchor (S-palmitoyl cysteine) is attached at Cys-837. Ser-862 bears the Phosphoserine; by PKC/PRKCG mark.

This sequence belongs to the glutamate-gated ion channel (TC 1.A.10.1) family. GRIA4 subfamily. In terms of assembly, homotetramer or heterotetramer of pore-forming glutamate receptor subunits. Tetramers may be formed by the dimerization of dimers. Interacts with EPB41L1 via its C-terminus. Isoform 3 interacts with PICK1. Found in a complex with GRIA1, GRIA2, GRIA3, CNIH2, CNIH3, CACNG2, CACNG3, CACNG4, CACNG5, CACNG7 and CACNG8. Interacts with CACNG5 and PRKCG. Found in a complex with GRIA1, GRIA2, GRIA3, DLG4, CACNG8 and CNIH2. In terms of processing, palmitoylated. Depalmitoylated upon L-glutamate stimulation. ZDHHC3/GODZ specifically palmitoylates Cys-611, which leads to Golgi retention and decreased cell surface expression. In contrast, Cys-837 palmitoylation does not affect cell surface expression but regulates stimulation-dependent endocytosis. Phosphorylated at Ser-862 by PRKCG; phosphorylation increases plasma membrane-associated GRI4 expression. As to expression, detected in cerebellum.

It is found in the cell membrane. The protein resides in the postsynaptic cell membrane. The protein localises to the cell projection. Its subcellular location is the dendrite. It carries out the reaction Ca(2+)(in) = Ca(2+)(out). The catalysed reaction is Na(+)(in) = Na(+)(out). The enzyme catalyses Mg(2+)(in) = Mg(2+)(out). In terms of biological role, ionotropic glutamate receptor that functions as a ligand-gated cation channel, gated by L-glutamate and glutamatergic agonists such as alpha-amino-3-hydroxy-5-methyl-4-isoxazolepropionic acid (AMPA), quisqualic acid, and kainic acid. L-glutamate acts as an excitatory neurotransmitter at many synapses in the central nervous system and plays an important role in fast excitatory synaptic transmission. Binding of the excitatory neurotransmitter L-glutamate induces a conformation change, leading to the opening of the cation channel, and thereby converts the chemical signal to an electrical impulse upon entry of monovalent and divalent cations such as sodium and calcium. The receptor then desensitizes rapidly and enters a transient inactive state, characterized by the presence of bound agonist. In the presence of CACNG8, shows resensitization which is characterized by a delayed accumulation of current flux upon continued application of L-glutamate. This Rattus norvegicus (Rat) protein is Glutamate receptor 4.